The following is a 628-amino-acid chain: Modular serine protease (628 aa).

A signal peptide spans Met1–Ala25. 4 LDL-receptor class A domains span residues Ala26–Val64, His69–Gly107, Asn122–Gly163, and Glu166–Asn204. 12 disulfide bridges follow: Cys27/Cys39, Cys34/Cys52, Cys46/Cys63, Cys70/Cys82, Cys77/Cys95, Cys89/Cys106, Cys123/Cys135, Cys130/Cys149, Cys143/Cys162, Cys167/Cys179, Cys174/Cys192, and Cys186/Cys203. The N-linked (GlcNAc...) asparagine glycan is linked to Asn36. Residue Asn204 is glycosylated (N-linked (GlcNAc...) asparagine). Sushi domains lie at Leu222–Lys285 and Ala300–Gln356. 4 disulfide bridges follow: Cys224–Cys270, Cys256–Cys283, Cys302–Cys341, and Cys326–Cys354. In terms of domain architecture, Peptidase S1 spans Ser369 to Asn621. N-linked (GlcNAc...) asparagine glycosylation is present at Asn376. Cys399 and Cys415 are joined by a disulfide. Residues His414, Asp472, and Ser563 each act as charge relay system in the active site. The N-linked (GlcNAc...) asparagine glycan is linked to Asn621.

This sequence belongs to the peptidase S1 family. May be proteolytically cleaved via an autocatalytic mechanism.

It is found in the secreted. Serine protease that plays a key role in innate immunity by activating the Toll pathway in response to infection with Gram-positive bacteria and fungi. During Gram-positive infection, acts downstream of PGRP-SA and upstream of Grass and Spz, and therefore appears to function in a pathway that links detection of Gram-positive lysine-type peptidoglycans to Toll activation. Functions in a separate pathway to the psh-mediated activation of the Toll pathway. The protein is Modular serine protease of Drosophila melanogaster (Fruit fly).